The sequence spans 908 residues: Protein translocase subunit SecA (908 aa).

ATP-binding positions include Gln87, 105-109 (GEGKT), and Asp512. The interval 876-908 (QAPMIRDGEKVGRNDPCPCGSGRKYKQCHGKLS) is disordered. Zn(2+) is bound by residues Cys892, Cys894, Cys903, and His904. Over residues 898 to 908 (RKYKQCHGKLS) the composition is skewed to basic residues.

The protein belongs to the SecA family. Monomer and homodimer. Part of the essential Sec protein translocation apparatus which comprises SecA, SecYEG and auxiliary proteins SecDF-YajC and YidC. The cofactor is Zn(2+).

Its subcellular location is the cell inner membrane. The protein resides in the cytoplasm. It catalyses the reaction ATP + H2O + cellular proteinSide 1 = ADP + phosphate + cellular proteinSide 2.. Its function is as follows. Part of the Sec protein translocase complex. Interacts with the SecYEG preprotein conducting channel. Has a central role in coupling the hydrolysis of ATP to the transfer of proteins into and across the cell membrane, serving both as a receptor for the preprotein-SecB complex and as an ATP-driven molecular motor driving the stepwise translocation of polypeptide chains across the membrane. This chain is Protein translocase subunit SecA, found in Shewanella baltica (strain OS185).